A 273-amino-acid polypeptide reads, in one-letter code: MEEQQKEGEAEVAEHWFSKWERQCLAEAEQEEQLPPELQEEAAAELAGLKSEKQKLWHLFQISATAVAQLYKDSGCQQQGLSMWDPFQNAAMAVTSLYKESGDAHQRSFDLGVQVGHQRRIKDVLEWVKKGRSTIRREDLISFLCGKVPPAPPPPRTPRTPPKPPTGVTSQAVATESSSSVDVDLQPFQEAIALHGLSGAMAGISMRSGDSPQDSGVASSGRRKTSFLEDDLNPFDSEELALHLDSGGIRKRTSAQCSDGITDSPIQKRNRMV.

Disordered regions lie at residues 146 to 181, 204 to 230, and 251 to 273; these read GKVP…SSSV, ISMR…FLED, and KRTS…NRMV. The segment covering 149–165 has biased composition (pro residues); sequence PPAPPPPRTPRTPPKPP. Composition is skewed to polar residues over residues 170–181, 208–218, and 254–267; these read SQAVATESSSSV, SGDSPQDSGVA, and SAQC…SPIQ. A nuclear localization signal region spans residues 249 to 273; sequence IRKRTSAQCSDGITDSPIQKRNRMV.

Belongs to the HAPSTR1 family. As to quaternary structure, homooligomer. Heterooligomer with HAPSTR1; the interaction is direct and stabilizes HAPSTR1 independently of HUWE1. Interacts with HUWE1. In terms of tissue distribution, expressed in a tissue-restricted manner compared to HAPSTR1.

The protein localises to the nucleus. Its function is as follows. Together with HAPSTR1 plays a central regulatory role in the cellular response to molecular stressors, such as DNA damage, nutrient scarcity, and protein misfolding. Regulates these multiple stress response signaling pathways by stabilizing HAPSTR1, but also independently of HAPSTR1. This chain is HUWE1-associated protein modifying stress responses 2, found in Homo sapiens (Human).